We begin with the raw amino-acid sequence, 124 residues long: Fluoride-specific ion channel FluC (124 aa).

4 helical membrane passes run 1–21 (MGVVFAVALGGAIGSALRFLL), 35–55 (VGTLFVNLVGAFFIGFFFAYL), 68–88 (LLITGLLGGLTTFSTYSYESF), and 99–119 (FLAYTLGTNVLGIFFTFLGYI). Na(+) contacts are provided by G75 and T78.

The protein belongs to the fluoride channel Fluc/FEX (TC 1.A.43) family.

The protein resides in the cell inner membrane. The enzyme catalyses fluoride(in) = fluoride(out). With respect to regulation, na(+) is not transported, but it plays an essential structural role and its presence is essential for fluoride channel function. Fluoride-specific ion channel. Important for reducing fluoride concentration in the cell, thus reducing its toxicity. The sequence is that of Fluoride-specific ion channel FluC from Aquifex aeolicus (strain VF5).